The following is a 266-amino-acid chain: Putative carbamate hydrolase RutD (266 aa).

It belongs to the AB hydrolase superfamily. Hydrolase RutD family.

It catalyses the reaction carbamate + 2 H(+) = NH4(+) + CO2. Functionally, involved in pyrimidine catabolism. May facilitate the hydrolysis of carbamate, a reaction that can also occur spontaneously. The protein is Putative carbamate hydrolase RutD of Enterobacter cloacae subsp. cloacae (strain ATCC 13047 / DSM 30054 / NBRC 13535 / NCTC 10005 / WDCM 00083 / NCDC 279-56).